The primary structure comprises 256 residues: Coiled-coil domain-containing protein 90B, mitochondrial (256 aa).

A mitochondrion-targeting transit peptide spans M1–S42. A coiled-coil region spans residues L129–K167. The helical transmembrane segment at T231–W253 threads the bilayer.

Belongs to the CCDC90 family. Interacts with MCU.

The protein resides in the mitochondrion membrane. This is Coiled-coil domain-containing protein 90B, mitochondrial (Ccdc90b) from Mus musculus (Mouse).